The primary structure comprises 457 residues: Guanine nucleotide-binding protein subunit alpha homolog (457 aa).

Residues 131–457 enclose the G-alpha domain; the sequence is RQVKLLLLGA…QRNLNALMLQ (327 aa). The segment at 134-147 is G1 motif; that stretch reads KLLLLGAGESGKST. Residues 139 to 146, 274 to 280, 299 to 303, 369 to 372, and A429 each bind GTP; these read GAGESGKS, LHCRKAT, DVGGQ, and NKTD. S146 and T280 together coordinate Mg(2+). The tract at residues 272–280 is G2 motif; it reads DILHCRKAT. Positions 295 to 304 are G3 motif; it reads FVFVDVGGQR. Residues 365–372 form a G4 motif region; the sequence is ILFLNKTD. Positions 427-432 are G5 motif; sequence TTAIDT.

This sequence belongs to the G-alpha family. G(12) subfamily. G proteins are composed of 3 units; alpha, beta and gamma. The alpha chain contains the guanine nucleotide binding site. In terms of tissue distribution, in ovary, expressed in nurse cells and oocyte. In early embryos, distributed uniformly. At the extended germband stage, accumulates in the mesoderm.

The protein resides in the cytoplasm. Its function is as follows. May play a role in a signal transduction pathway used during gastrulation. Required specifically for the ventral furrow and posterior midgut invaginations, where it is necessary for coordinating cell shape changes. Functionally, guanine nucleotide-binding proteins (G proteins) are involved as modulators or transducers in various transmembrane signaling systems. This chain is Guanine nucleotide-binding protein subunit alpha homolog (cta), found in Drosophila melanogaster (Fruit fly).